Consider the following 711-residue polypeptide: Double-stranded RNA-specific editase 1 (711 aa).

Positions 1 to 78 (MDIEDEENMS…KRRKTPGPVL (78 aa)) are disordered. The segment covering 63–73 (SKYRLKKRRKT) has biased composition (basic residues). The region spanning 78–144 (LPKNALMQLN…AEKALRSFVQ (67 aa)) is the DRBM 1 domain. Interaction with substrate RNA stretches follow at residues 83–88 (LMQLNE) and 104–105 (VH). Residue S149 is modified to Phosphoserine. A disordered region spans residues 176 to 220 (LFNGFETPDKSEPPFYVGSNGDDSFSSSGDVSLSASPVPASLTQP). Over residues 192–213 (VGSNGDDSFSSSGDVSLSASPV) the composition is skewed to low complexity. In terms of domain architecture, DRBM 2 spans 231 to 298 (PSGKNPVMIL…AQSALATVFN (68 aa)). 2 interaction with substrate RNA regions span residues 237-242 (VMILNE) and H259. An A to I editase domain is found at 370-707 (SVSTGTKCIN…VEKPTEQDQF (338 aa)). Position 394 (H394) interacts with Zn(2+). E396 functions as the Proton donor in the catalytic mechanism. Residues R400 and R401 each coordinate 1D-myo-inositol hexakisphosphate. C451 and C526 together coordinate Zn(2+). Residues K529, R532, K639, K672, K682, and K700 each coordinate 1D-myo-inositol hexakisphosphate.

As to quaternary structure, homodimer. Homodimerization is essential for its catalytic activity. Can form heterodimers with isoform 5 of ADAR/ADAR1. Requires 1D-myo-inositol hexakisphosphate as cofactor.

It localises to the nucleus. It is found in the nucleolus. The catalysed reaction is adenosine in double-stranded RNA + H2O + H(+) = inosine in double-stranded RNA + NH4(+). Catalyzes the hydrolytic deamination of adenosine to inosine in double-stranded RNA (dsRNA) referred to as A-to-I RNA editing. This may affect gene expression and function in a number of ways that include mRNA translation by changing codons and hence the amino acid sequence of proteins; pre-mRNA splicing by altering splice site recognition sequences; RNA stability by changing sequences involved in nuclease recognition; genetic stability in the case of RNA virus genomes by changing sequences during viral RNA replication; and RNA structure-dependent activities such as microRNA production or targeting or protein-RNA interactions. Can edit both viral and cellular RNAs and can edit RNAs at multiple sites (hyper-editing) or at specific sites (site-specific editing). Its cellular RNA substrates include: bladder cancer-associated protein (BLCAP), neurotransmitter receptors for glutamate (GRIA2 and GRIK2) and serotonin (HTR2C), GABA receptor (GABRA3) and potassium voltage-gated channel (KCNA1). Site-specific RNA editing of transcripts encoding these proteins results in amino acid substitutions which consequently alter their functional activities. Edits GRIA2 at both the Q/R and R/G sites efficiently but converts the adenosine in hotspot1 much less efficiently. Can inhibit cell proliferation and migration and can stimulate exocytosis. This is Double-stranded RNA-specific editase 1 (Adarb1) from Mus musculus (Mouse).